Consider the following 71-residue polypeptide: Protein SlyX homolog (71 aa).

The protein belongs to the SlyX family.

The chain is Protein SlyX homolog from Azotobacter vinelandii (strain DJ / ATCC BAA-1303).